A 449-amino-acid polypeptide reads, in one-letter code: Probable ubiquitin carboxyl-terminal hydrolase 8 (449 aa).

The UBP-type zinc-finger motif lies at Glu6–Gln113. Residues Cys8, His10, Cys38, Cys41, Cys51, Cys54, Cys59, His64, His68, His74, Cys87, and Cys90 each coordinate Zn(2+). A USP domain is found at Arg145 to Arg435. Cys154 (nucleophile) is an active-site residue. Zn(2+) is bound by residues His178, Cys183, Cys188, Cys191, His246, Cys257, Cys259, His262, Cys275, Cys278, Cys317, and Cys320. Residue His395 is the Proton acceptor of the active site.

It belongs to the peptidase C19 family. UBP8 subfamily. Component of the 1.8 MDa SAGA (Spt-Ada-Gcn5 acetyltransferase) complex, which is composed of 19 subunits tra1, spt7, taf5, ngg1/ada3, sgf73, spt20, spt8, taf12, taf6, hfi1/ada1, ubp8, gcn5, ada2, spt3, sgf29, taf10, taf9, sgf11 and sus1. The SAGA complex is composed of 4 modules, namely the HAT (histone acetyltransferase) module (gcn5, ada2, ngg1/ada3 and sgf29), the DUB (deubiquitinating) module (ubp8, sgf11, sgf73 and sus1), the core or TAF (TBP-associated factor) module (taf5, taf6, taf9, taf10 and taf12), and the Tra1 or SPT (Suppressor of Ty) module (tra1, hfi1/ada1, spt3, spt7, spt8 and spt20). The Tra1/SPT module binds activators, the core module recruits TBP (TATA-binding protein), the HAT module contains the histone H3 acetyltransferase gcn5, and the DUB module comprises the histone H2B deubiquitinase ubp8.

The protein resides in the nucleus. Its subcellular location is the nucleoplasm. It catalyses the reaction Thiol-dependent hydrolysis of ester, thioester, amide, peptide and isopeptide bonds formed by the C-terminal Gly of ubiquitin (a 76-residue protein attached to proteins as an intracellular targeting signal).. In terms of biological role, histone deubiquitinating enzyme component of the transcription coactivator SAGA complex. SAGA acts as a general cofactor required for essentially all RNA polymerase II transcription. At the promoters, SAGA is required for transcription pre-initiation complex (PIC) recruitment. It influences RNA polymerase II transcriptional activity through different activities such as TBP interaction (via core/TAF module) and promoter selectivity, interaction with transcription activators (via Tra1/SPT module), and chromatin modification through histone acetylation (via HAT module) and deubiquitination (via DUB module). SAGA preferentially acetylates histones H3 (to form H3K9ac, H3K14ac, H3K18ac and H3K23ac) and H2B and deubiquitinates histone H2B. SAGA interacts with DNA via upstream activating sequences (UASs). Within the DUB module, the correctly positioned zinc finger domains of sgf11 and sgf73 are both required to fully activate the ubiquitin hydrolase ubp8. The DUB module is also linked to the splicing efficiency of many transcripts. This chain is Probable ubiquitin carboxyl-terminal hydrolase 8 (ubp8), found in Schizosaccharomyces pombe (strain 972 / ATCC 24843) (Fission yeast).